Consider the following 896-residue polypeptide: Valine--tRNA ligase (896 aa).

A 'HIGH' region motif is present at residues P43–H53. The 'KMSKS' region signature appears at K545–S549. K548 contacts ATP. Residues D831 to L857 adopt a coiled-coil conformation.

The protein belongs to the class-I aminoacyl-tRNA synthetase family. ValS type 1 subfamily. Monomer.

Its subcellular location is the cytoplasm. It carries out the reaction tRNA(Val) + L-valine + ATP = L-valyl-tRNA(Val) + AMP + diphosphate. Its function is as follows. Catalyzes the attachment of valine to tRNA(Val). As ValRS can inadvertently accommodate and process structurally similar amino acids such as threonine, to avoid such errors, it has a 'posttransfer' editing activity that hydrolyzes mischarged Thr-tRNA(Val) in a tRNA-dependent manner. This chain is Valine--tRNA ligase, found in Rhizorhabdus wittichii (strain DSM 6014 / CCUG 31198 / JCM 15750 / NBRC 105917 / EY 4224 / RW1) (Sphingomonas wittichii).